Here is a 159-residue protein sequence, read N- to C-terminus: Fatty acid-binding protein homolog 1 (159 aa).

Positions 1–17 are cleaved as a signal peptide; it reads MCAKIALLLVLVGAASA.

This sequence belongs to the calycin superfamily. Fatty-acid binding protein (FABP) family. First detected in hypodermal precursor cells at the time of gastrulation. From the two-fold stage through to three-fold stages, expression is localized exclusively to hyp-7 but disappears in newly hatched L1s and subsequent developmental stages. Expression from L1 to adult stages is found in a single neuron in the ventral cord with a process into the nerve ring.

The protein localises to the secreted. Functionally, may play a role in sequestering potentially toxic fatty acids and their peroxidation products, or it may be involved in the maintenance of the impermeable lipid layer of the eggshell. This chain is Fatty acid-binding protein homolog 1 (lbp-1), found in Caenorhabditis elegans.